The following is a 63-amino-acid chain: Protein BP4A (63 aa).

As to expression, pollen specific.

The chain is Protein BP4A (BP4A) from Brassica napus (Rape).